The sequence spans 618 residues: Sodium/iodide cotransporter (618 aa).

The Extracellular portion of the chain corresponds to 1-14 (MEGAEAGARATFGA). A helical transmembrane segment spans residues 15-31 (WDYGVFATMLLVSTGIG). Residues 32–56 (LWVGLARGGQRSADDFFTGGRQLAA) are Cytoplasmic-facing. Residues 57–80 (VPVGLSLAASFMSAVQVLGVPAEA) traverse the membrane as a discontinuously helical segment. Residues Ser-69, Val-71, and Gln-72 each contribute to the Na(+) site. Val-76 is an iodide binding site. Residues 81 to 84 (ARYG) lie on the Extracellular side of the membrane. The chain crosses the membrane as a helical span at residues 85–105 (LKFLWMCAGQLLNSLLTAFLF). Met-90 lines the iodide pocket. Topologically, residues 106-130 (LPIFYRLGLTSTYQYLELRFSRAVR) are cytoplasmic. The chain crosses the membrane as a helical span at residues 131-157 (LCGTLQYLVATMLYTGIVIYAPALILN). Tyr-144 provides a ligand contact to Na(+). The Extracellular portion of the chain corresponds to 158–163 (QVTGLD). The helical transmembrane segment at 164-181 (IWASLLSTGIICTLYTTV) threads the bilayer. Residues 182-189 (GGMKAVVW) are Cytoplasmic-facing. Residues 190–208 (TDVFQVVVMLVGFWVILAR) traverse the membrane as a helical segment. The Extracellular portion of the chain corresponds to 209 to 243 (GVILLGGPRNVLSLAQNHSRINLMDFDPDPRSRYT). Residues 244–266 (FWTFIVGGTLVWLSMYGVNQAQV) form a discontinuously helical membrane-spanning segment. Trp-255 contributes to the iodide binding site. Met-258 lines the Na(+) pocket. The Cytoplasmic segment spans residues 267–278 (QRYVACHTEGKA). A helical membrane pass occupies residues 279–301 (KLALLVNQLGLFLIVASAACCGI). Topologically, residues 302 to 335 (VMFVYYKDCDPLLTGRISAPDQYMPLLVLDIFED) are extracellular. The helical transmembrane segment at 336–363 (LPGVPGLFLACAYSGTLSTASTSINAMA) threads the bilayer. Residues 364–386 (AVTVEDLIKPRMPGLAPRKLVFI) are Cytoplasmic-facing. A helical membrane pass occupies residues 387-408 (SKGLSFIYGSACLTVAALSSLL). Residues 409–411 (GGG) are Extracellular-facing. A helical transmembrane segment spans residues 412-437 (VLQGSFTVMGVISGPLLGAFTLGMLL). An iodide-binding site is contributed by Leu-413. Residues Ser-416 and Phe-417 each contribute to the Na(+) site. An iodide-binding site is contributed by Phe-417. The Cytoplasmic segment spans residues 438–441 (PACN). Residues 442–465 (TPGVLSGLAAGLAVSLWVAVGATL) form a helical membrane-spanning segment. The Extracellular portion of the chain corresponds to 466 to 520 (YPPGEQTMGVLPTSAAGCTNDSVLLGPPGATNASNGIPSSGMDTGRPALADTFYA). N-linked (GlcNAc...) asparagine glycans are attached at residues Asn-485 and Asn-497. A helical membrane pass occupies residues 521-545 (ISYLYYGALGTLTTMLCGALISYLT). Residues 546-618 (GPTKRSSLGP…YLGHDVETNL (73 aa)) are Cytoplasmic-facing. At Ser-551 the chain carries Phosphoserine; by PKA. A disordered region spans residues 587-618 (EDIPAVTKKPPGLKPGAETHPLYLGHDVETNL).

This sequence belongs to the sodium:solute symporter (SSF) (TC 2.A.21) family. In terms of assembly, monomer.

It localises to the cell membrane. Its subcellular location is the cytoplasm. The enzyme catalyses iodide(out) + 2 Na(+)(out) = iodide(in) + 2 Na(+)(in). It catalyses the reaction chlorate(out) + 2 Na(+)(out) = chlorate(in) + 2 Na(+)(in). The catalysed reaction is thiocyanate(out) + 2 Na(+)(out) = thiocyanate(in) + 2 Na(+)(in). It carries out the reaction nitrate(out) + 2 Na(+)(out) = nitrate(in) + 2 Na(+)(in). The enzyme catalyses selenocyanate(out) + 2 Na(+)(out) = selenocyanate(in) + 2 Na(+)(in). Perchlorate inhibits iodide transport activity. Oxyanions inhibit iodide transport activity by blocking the binding sites for iodide and one of the sodium ions. In terms of biological role, sodium:iodide symporter that mediates the transport of iodide into the thyroid gland. Can also mediate the transport of chlorate, thiocynate, nitrate and selenocynate. The sequence is that of Sodium/iodide cotransporter (Slc5a5) from Rattus norvegicus (Rat).